Reading from the N-terminus, the 255-residue chain is tRNA pseudouridine synthase A (255 aa).

Aspartate 52 functions as the Nucleophile in the catalytic mechanism. Residue tyrosine 111 participates in substrate binding.

This sequence belongs to the tRNA pseudouridine synthase TruA family. Homodimer.

The catalysed reaction is uridine(38/39/40) in tRNA = pseudouridine(38/39/40) in tRNA. Its function is as follows. Formation of pseudouridine at positions 38, 39 and 40 in the anticodon stem and loop of transfer RNAs. In Cereibacter sphaeroides (strain ATCC 17023 / DSM 158 / JCM 6121 / CCUG 31486 / LMG 2827 / NBRC 12203 / NCIMB 8253 / ATH 2.4.1.) (Rhodobacter sphaeroides), this protein is tRNA pseudouridine synthase A.